Reading from the N-terminus, the 74-residue chain is uncharacterized protein (74 aa).

An N-terminal signal peptide occupies residues 1 to 19; that stretch reads MIGLIVVPILFAIKGIVVG. The tract at residues 26–74 is disordered; sequence KFGKHSNTKDQKEDKDEDKRQSISQRKQHTEWPIEENRIQRRAPNQSAL. 2 stretches are compositionally biased toward basic and acidic residues: residues 32 to 46 and 53 to 64; these read NTKD…DKRQ and QHTEWPIEENRI.

This is an uncharacterized protein from Saccharomyces cerevisiae (strain ATCC 204508 / S288c) (Baker's yeast).